A 102-amino-acid polypeptide reads, in one-letter code: Small ribosomal subunit protein uS10 (102 aa).

It belongs to the universal ribosomal protein uS10 family. In terms of assembly, part of the 30S ribosomal subunit.

Functionally, involved in the binding of tRNA to the ribosomes. The protein is Small ribosomal subunit protein uS10 of Arthrobacter sp. (strain FB24).